The chain runs to 160 residues: Large ribosomal subunit protein eL21 (160 aa).

2 stretches are compositionally biased toward basic and acidic residues: residues 112-123 and 136-145; these read NDQKKKEAKEKG and REAHFVRTNG. The segment at 112 to 145 is disordered; sequence NDQKKKEAKEKGTWVQLKRQPAPPREAHFVRTNG.

Belongs to the eukaryotic ribosomal protein eL21 family. Component of the large ribosomal subunit.

The protein resides in the cytoplasm. Its subcellular location is the cytosol. It localises to the endoplasmic reticulum. Component of the large ribosomal subunit. The ribosome is a large ribonucleoprotein complex responsible for the synthesis of proteins in the cell. This is Large ribosomal subunit protein eL21 (RPL21) from Oryctolagus cuniculus (Rabbit).